Consider the following 577-residue polypeptide: ER degradation-enhancing alpha-mannosidase-like protein 2 (577 aa).

A signal peptide spans 1–21; it reads MPFRLLIPLGLVCVLLPLHHG. Residues N90, N112, N289, and N450 are each glycosylated (N-linked (GlcNAc...) asparagine). Positions 513–561 are disordered; that stretch reads PKRAQRKTVRSGPWEPQSGPATLSSPANQPREKQPAQQRTPLLSCPSQP. Polar residues-rich tracts occupy residues 531–540 and 547–561; these read GPATLSSPAN and PAQQ…PSQP.

It belongs to the glycosyl hydrolase 47 family. N-glycosylated.

Its subcellular location is the endoplasmic reticulum lumen. Involved in the endoplasmic reticulum-associated degradation (ERAD) pathway that targets misfolded glycoproteins for degradation in an N-glycan-dependent manner. May initiate ERAD by promoting the first mannose trimming step of ERAD substrates, from Man9GlcNAc2 to Man8GlcNAc2. Seems to recognize and bind to exposed hydrophobic regions in target proteins. The polypeptide is ER degradation-enhancing alpha-mannosidase-like protein 2 (Mus musculus (Mouse)).